Consider the following 185-residue polypeptide: HTH-type transcriptional regulator Hpr (185 aa).

Residues 13–157 (AMIFSQRIAQ…LIAILRNIYG (145 aa)) form the HTH marR-type domain. A DNA-binding region (H-T-H motif) is located at residues 63-86 (ISEIAKFGVMHVSTAFNFSKKLEE).

As to quaternary structure, homodimer.

Negative regulator of protease production and sporulation. This chain is HTH-type transcriptional regulator Hpr, found in Bacillus cereus (strain G9842).